Consider the following 343-residue polypeptide: GTPase Obg (343 aa).

The Obg domain occupies 1–157; sequence MKFIDEVSIS…IEVRLELKLI (157 aa). A disordered region spans residues 13-44; the sequence is SGRGGPGCVSFRRESMQARGGPDGGNGGKGGD. Gly residues predominate over residues 33–43; that stretch reads GPDGGNGGKGG. In terms of domain architecture, OBG-type G spans 158 to 338; the sequence is ADVGIVGFPN…FVQELARQIL (181 aa). Residues 164–171, 189–193, 211–214, 290–293, and 319–321 contribute to the GTP site; these read GFPNAGKS, FTTLT, DIPG, NKID, and SAV. Mg(2+) is bound by residues Ser-171 and Thr-191.

The protein belongs to the TRAFAC class OBG-HflX-like GTPase superfamily. OBG GTPase family. In terms of assembly, monomer. It depends on Mg(2+) as a cofactor.

The protein localises to the cytoplasm. Functionally, an essential GTPase which binds GTP, GDP and possibly (p)ppGpp with moderate affinity, with high nucleotide exchange rates and a fairly low GTP hydrolysis rate. Plays a role in control of the cell cycle, stress response, ribosome biogenesis and in those bacteria that undergo differentiation, in morphogenesis control. The chain is GTPase Obg from Bdellovibrio bacteriovorus (strain ATCC 15356 / DSM 50701 / NCIMB 9529 / HD100).